The sequence spans 452 residues: Methionine aminopeptidase 2-1 (452 aa).

The interval 1-100 is disordered; that stretch reads MAAKVADDVA…VRIDEVFPND (100 aa). Residues 37–51 show a composition bias toward acidic residues; sequence EHDDSDDDNEAEDGA. The segment covering 60–73 has biased composition (basic residues); sequence KKKKKRKPRKKKKA. His-205 provides a ligand contact to substrate. Residues Asp-225, Asp-236, and His-305 each contribute to the a divalent metal cation site. Residue His-313 coordinates substrate. A divalent metal cation contacts are provided by Glu-338 and Glu-433.

This sequence belongs to the peptidase M24A family. Methionine aminopeptidase eukaryotic type 2 subfamily. Requires Co(2+) as cofactor. It depends on Zn(2+) as a cofactor. Mn(2+) is required as a cofactor. The cofactor is Fe(2+).

It localises to the cytoplasm. The enzyme catalyses Release of N-terminal amino acids, preferentially methionine, from peptides and arylamides.. Cotranslationally removes the N-terminal methionine from nascent proteins. The N-terminal methionine is often cleaved when the second residue in the primary sequence is small and uncharged (Met-Ala-, Cys, Gly, Pro, Ser, Thr, or Val). This is Methionine aminopeptidase 2-1 from Pyrenophora teres f. teres (strain 0-1) (Barley net blotch fungus).